The chain runs to 200 residues: HTH-type transcriptional repressor KstR2 (200 aa).

The HTH tetR-type domain maps to 9 to 69; sequence NSRRGELLEL…ELLRGFLDWL (61 aa). A DNA-binding region (H-T-H motif) is located at residues 32-51; sequence TVRDIADGAGILSGSLYHHF.

In terms of assembly, homodimer.

Functionally, controls the expression of a small regulon that may play a role in the utilization of cholesterol. The polypeptide is HTH-type transcriptional repressor KstR2 (kstR2) (Mycobacterium tuberculosis (strain CDC 1551 / Oshkosh)).